The sequence spans 199 residues: GTP cyclohydrolase-2 (199 aa).

Residue 52–56 (RMHSE) participates in GTP binding. Zn(2+)-binding residues include Cys57, Cys68, and Cys70. GTP contacts are provided by residues Gln73, 94–96 (EGR), and Thr116. The Proton acceptor role is filled by Asp128. The Nucleophile role is filled by Arg130. 2 residues coordinate GTP: Thr151 and Lys156.

It belongs to the GTP cyclohydrolase II family. The cofactor is Zn(2+).

It catalyses the reaction GTP + 4 H2O = 2,5-diamino-6-hydroxy-4-(5-phosphoribosylamino)-pyrimidine + formate + 2 phosphate + 3 H(+). It functions in the pathway cofactor biosynthesis; riboflavin biosynthesis; 5-amino-6-(D-ribitylamino)uracil from GTP: step 1/4. Functionally, catalyzes the conversion of GTP to 2,5-diamino-6-ribosylamino-4(3H)-pyrimidinone 5'-phosphate (DARP), formate and pyrophosphate. The protein is GTP cyclohydrolase-2 of Aliivibrio fischeri (strain MJ11) (Vibrio fischeri).